Here is a 575-residue protein sequence, read N- to C-terminus: Serine/threonine-protein phosphatase 2A regulatory subunit B'' subunit beta (575 aa).

The disordered stretch occupies residues 41 to 131 (APGRDQPTPG…SQSIPTFYFP (91 aa)). The 36-residue stretch at 388 to 423 (KTPTSIEYWFRCMDLDGDGALSMFELEYFYEEQCRR) folds into the EF-hand domain. Ca(2+)-binding residues include Asp-401, Asp-403, Asp-405, and Glu-412.

In terms of assembly, PP2A consists of a common heterodimeric core enzyme, composed of a 36 kDa catalytic subunit (subunit C) and a 65 kDa constant regulatory subunit (PR65 or subunit A), that associates with a variety of regulatory subunits. Proteins that associate with the core dimer include three families of regulatory subunits B (the R2/B/PR55/B55, R3/B''/PR72/PR130/PR59 and R5/B'/B56 families), the 48 kDa variable regulatory subunit, viral proteins, and cell signaling molecules. Interacts with N-terminal region of CDC6. Interacts with NOD2.

It is found in the nucleus. The B regulatory subunit might modulate substrate selectivity and catalytic activity, and might also direct the localization of the catalytic enzyme to a particular subcellular compartment. The polypeptide is Serine/threonine-protein phosphatase 2A regulatory subunit B'' subunit beta (PPP2R3B) (Homo sapiens (Human)).